The primary structure comprises 236 residues: NAP1-binding protein 2 (236 aa).

S102 carries the phosphoserine modification. The 62-residue stretch at 110 to 171 (IVNQRAVALY…PEEFVSYIQP (62 aa)) folds into the SH3 domain. S196 and S235 each carry phosphoserine.

As to quaternary structure, interacts with PBS2 and PTC1.

It is found in the cytoplasm. Functionally, negatively regulates the high-osmolarity glycerol (HOG) pathway through its negative regulation of the HOG1 kinase activity. Mediates the binding between the PTC1 phosphatase and the PBS2 MAP/ERK kinase (MEK). With PTC1, regulates endoplasmic reticulum inheritance through the cell wall integrity (CWI) MAPK pathway by modulating the MAPK, SLT2. The protein is NAP1-binding protein 2 (NBP2) of Saccharomyces cerevisiae (strain ATCC 204508 / S288c) (Baker's yeast).